Here is a 137-residue protein sequence, read N- to C-terminus: Proofreading thioesterase EntH (137 aa).

Glu-63 acts as the Nucleophile or proton acceptor in catalysis.

It belongs to the thioesterase PaaI family. Homotetramer. Dimer of dimers. Interacts specifically with the aryl carrier protein (ArCP) domain of EntB.

It is found in the cytoplasm. Its pathway is siderophore biosynthesis; enterobactin biosynthesis. Its function is as follows. Required for optimal enterobactin synthesis. Acts as a proofreading enzyme that prevents EntB misacylation by hydrolyzing the thioester bound existing between EntB and wrongly charged molecules. This is Proofreading thioesterase EntH from Salmonella paratyphi B (strain ATCC BAA-1250 / SPB7).